Here is a 144-residue protein sequence, read N- to C-terminus: Large ribosomal subunit protein bL31c (144 aa).

Residues 1-48 constitute a chloroplast transit peptide; it reads MAVSLPNSFLQISPCVPSLQLRKPVMAAVKGGKQSVRRSSNTVVQITC.

Belongs to the bacterial ribosomal protein bL31 family. Type A subfamily. Part of the 50S ribosomal subunit.

It localises to the plastid. It is found in the chloroplast. In terms of biological role, binds the 23S rRNA. This is Large ribosomal subunit protein bL31c (RPL31) from Arabidopsis thaliana (Mouse-ear cress).